A 1812-amino-acid chain; its full sequence is Protein virilizer homolog (1812 aa).

Residue A2 is modified to N-acetylalanine. Disordered stretches follow at residues 132–302 (ISHD…EQIS) and 576–596 (KTSS…GLER). A phosphoserine mark is found at S133 and S138. Residues 139–152 (PPPPPPPPPPPQPQ) are compositionally biased toward pro residues. Residues 160–169 (KHADGEKEDQ) are compositionally biased toward basic and acidic residues. Position 173 is a phosphoserine (S173). A compositionally biased stretch (pro residues) spans 174 to 190 (PPRPQPRGPRTPPGPPP). The residue at position 184 (T184) is a Phosphothreonine. Residue S222 is modified to Phosphoserine. The span at 224 to 233 (DRNSVPQEGQ) shows a compositional bias: polar residues. Acidic residues-rich tracts occupy residues 234–266 (YSDE…EDED) and 274–302 (IPEE…EQIS). The segment covering 584–596 (SEPDHDTDAGLER) has biased composition (basic and acidic residues). A Phosphotyrosine modification is found at Y914. Residue S1579 is modified to Phosphoserine. 2 disordered regions span residues 1616 to 1635 (HVVP…GIRP) and 1663 to 1812 (KEVV…SFTR). The segment covering 1689-1698 (GFSGNRGGRG) has biased composition (gly residues). Position 1708 is a phosphothreonine (T1708). Omega-N-methylarginine is present on R1723. Positions 1723–1748 (RGSSWSAQNTPRGNYNESRGGQSNFN) are enriched in polar residues. R1741 bears the Asymmetric dimethylarginine; alternate mark. Omega-N-methylarginine; alternate is present on R1741. An asymmetric dimethylarginine mark is found at R1773, R1775, and R1793. Residues 1788–1802 (GSGGSRGKFVSGGSG) are compositionally biased toward gly residues. Residues 1803-1812 (RGRHVRSFTR) show a composition bias toward basic residues.

Belongs to the vir family. As to quaternary structure, component of the WMM complex, a N6-methyltransferase complex composed of a catalytic subcomplex, named MAC, and of an associated subcomplex, named MACOM. The MAC subcomplex is composed of METTL3 and METTL14. The MACOM subcomplex is composed of WTAP, ZC3H13, CBLL1/HAKAI, VIRMA, and, in some cases of RBM15 (RBM15 or RBM15B). Interacts with WTAP. Also a component of a MACOM-like complex, named WTAP complex, composed of WTAP, ZC3H13, CBLL1, VIRMA, RBM15, BCLAF1 and THRAP3. Interacts with NUDT21 and CPSF6.

It localises to the nucleus speckle. The protein resides in the nucleus. The protein localises to the nucleoplasm. It is found in the cytoplasm. In terms of biological role, associated component of the WMM complex, a complex that mediates N6-methyladenosine (m6A) methylation of RNAs, a modification that plays a role in the efficiency of mRNA splicing and RNA processing. Acts as a key regulator of m6A methylation by promoting m6A methylation of mRNAs in the 3'-UTR near the stop codon: recruits the catalytic core components METTL3 and METTL14, thereby guiding m6A methylation at specific sites. Required for mRNA polyadenylation via its role in selective m6A methylation: m6A methylation of mRNAs in the 3'-UTR near the stop codon correlating with alternative polyadenylation (APA). This Homo sapiens (Human) protein is Protein virilizer homolog.